The following is a 77-amino-acid chain: Small ribosomal subunit protein bS21 (77 aa).

Positions 38 to 52 are enriched in basic and acidic residues; it reads KPSEKRAREKAEAIR. The tract at residues 38-77 is disordered; that stretch reads KPSEKRAREKAEAIRRTRKLARKRAQREGIVSNGRTASVR. The span at 53–62 shows a compositional bias: basic residues; that stretch reads RTRKLARKRA.

This sequence belongs to the bacterial ribosomal protein bS21 family.

This Bartonella bacilliformis (strain ATCC 35685 / KC583 / Herrer 020/F12,63) protein is Small ribosomal subunit protein bS21.